Here is a 696-residue protein sequence, read N- to C-terminus: uncharacterized protein (696 aa).

Residues 293–426 form the GGDEF domain; that stretch reads SVLGLVLLGF…GSRQYCFYEE (134 aa). An EAL domain is found at 435–689; the sequence is RIQLEHALHQ…EITAFLAEGN (255 aa).

This is an uncharacterized protein from Synechocystis sp. (strain ATCC 27184 / PCC 6803 / Kazusa).